The following is a 260-amino-acid chain: Neurotrophin-3 (260 aa).

Residues 1–18 (MSILFYVMFLPYLCGIHA) form the signal peptide. The propeptide occupies 19-141 (TNMDKRNLPE…VNNRTSRRKR (123 aa)). Asn134 carries N-linked (GlcNAc...) asparagine glycosylation. Disulfide bonds link Cys155–Cys220, Cys198–Cys249, and Cys208–Cys251.

The protein belongs to the NGF-beta family.

It localises to the secreted. Seems to promote the survival of visceral and proprioceptive sensory neurons. The protein is Neurotrophin-3 (ntf3) of Xenopus laevis (African clawed frog).